Here is a 511-residue protein sequence, read N- to C-terminus: UDP-N-acetylmuramate--L-alanine ligase (511 aa).

127–133 is a binding site for ATP; the sequence is GTHGKTT. The interval 481–511 is disordered; the sequence is VGTVPGGEVGGATTIGGTVPGGSAPGASAAG. Over residues 484–504 the composition is skewed to gly residues; sequence VPGGEVGGATTIGGTVPGGSA.

It belongs to the MurCDEF family.

It localises to the cytoplasm. The enzyme catalyses UDP-N-acetyl-alpha-D-muramate + L-alanine + ATP = UDP-N-acetyl-alpha-D-muramoyl-L-alanine + ADP + phosphate + H(+). It participates in cell wall biogenesis; peptidoglycan biosynthesis. Its function is as follows. Cell wall formation. The protein is UDP-N-acetylmuramate--L-alanine ligase of Salinispora arenicola (strain CNS-205).